The primary structure comprises 339 residues: MAGRVKIKQKELIDSTVKNKNVMNLFHEIIGSKGNINFSVVWPKFKKIKQSVYDYISTLSVLEKASVMQNFEDDKKLLELFVQKLWAAYEGYFKYPEIEKYEVEGQVNFNLVPQYVLEKFSQLYRIRINSELVTLILNSCAFMSKYNDYILKKDPYILTITPGLCFSPIPNFEDLNFKHLYNSDKNSQHDKDFIMFILYKLYMAALGVYNAISIPDIDVEDLENIILSSVSQIKKQIPRCKDAFNKIESSVHLLRKNFNTYYSDYVGSGYNPTIIMEQYIKDISQDSKNISPRISYQFRTIIKYYRDMIATKHQTMDPQVLNLVKHVEKKLDMLDREKN.

Belongs to the asfivirus H339R family. In terms of assembly, interacts with NACA (alpha chain of nascent polypeptide-associated complex).

The protein localises to the host cytoplasm. The protein resides in the host nucleus. It localises to the virion. This chain is Protein H339R, found in African swine fever virus (isolate Warthog/Namibia/Wart80/1980) (ASFV).